Reading from the N-terminus, the 83-residue chain is Acyl carrier protein (83 aa).

A Carrier domain is found at 2–77; it reads STIEEKVKTI…AAIDFISNSH (76 aa). Ser-37 bears the O-(pantetheine 4'-phosphoryl)serine mark.

It belongs to the acyl carrier protein (ACP) family. 4'-phosphopantetheine is transferred from CoA to a specific serine of apo-ACP by AcpS. This modification is essential for activity because fatty acids are bound in thioester linkage to the sulfhydryl of the prosthetic group.

The protein localises to the cytoplasm. It participates in lipid metabolism; fatty acid biosynthesis. Carrier of the growing fatty acid chain in fatty acid biosynthesis. The chain is Acyl carrier protein from Blochmanniella pennsylvanica (strain BPEN).